A 332-amino-acid polypeptide reads, in one-letter code: Glyceraldehyde-3-phosphate dehydrogenase (332 aa).

Residues 12 to 13 (RI), Asp34, Lys78, and Thr120 contribute to the NAD(+) site. D-glyceraldehyde 3-phosphate contacts are provided by residues 149–151 (SCT), Thr180, 209–210 (TG), and Arg232. Catalysis depends on Cys150, which acts as the Nucleophile. Asn314 is a binding site for NAD(+).

Belongs to the glyceraldehyde-3-phosphate dehydrogenase family. Homotetramer.

It is found in the cytoplasm. The catalysed reaction is D-glyceraldehyde 3-phosphate + phosphate + NAD(+) = (2R)-3-phospho-glyceroyl phosphate + NADH + H(+). It functions in the pathway carbohydrate degradation; glycolysis; pyruvate from D-glyceraldehyde 3-phosphate: step 1/5. Its function is as follows. Catalyzes the oxidative phosphorylation of glyceraldehyde 3-phosphate (G3P) to 1,3-bisphosphoglycerate (BPG) using the cofactor NAD. The first reaction step involves the formation of a hemiacetal intermediate between G3P and a cysteine residue, and this hemiacetal intermediate is then oxidized to a thioester, with concomitant reduction of NAD to NADH. The reduced NADH is then exchanged with the second NAD, and the thioester is attacked by a nucleophilic inorganic phosphate to produce BPG. This chain is Glyceraldehyde-3-phosphate dehydrogenase (gapA), found in Buchnera aphidicola subsp. Schizaphis graminum (strain Sg).